The primary structure comprises 104 residues: Cysteine-rich and transmembrane domain-containing protein 1 (104 aa).

Composition is skewed to pro residues over residues 1–25 (MNPE…PQQP) and 33–47 (GAPP…PPQG). The interval 1–47 (MNPENPPPYPGPGPTAPYPPYPQQPMGPMGPMGAPPPQGYPYPPPQG) is disordered. The chain crosses the membrane as a helical span at residues 81–98 (LGPSTCLTACWTALCCCC).

The protein belongs to the CYSTM1 family.

The protein localises to the membrane. The polypeptide is Cysteine-rich and transmembrane domain-containing protein 1 (Cystm1) (Mus musculus (Mouse)).